Consider the following 72-residue polypeptide: Large ribosomal subunit protein bL31 (72 aa).

Zn(2+)-binding residues include Cys17, Cys19, Cys37, and Cys40.

This sequence belongs to the bacterial ribosomal protein bL31 family. Type A subfamily. In terms of assembly, part of the 50S ribosomal subunit. Zn(2+) serves as cofactor.

Functionally, binds the 23S rRNA. The protein is Large ribosomal subunit protein bL31 of Clostridium botulinum (strain Loch Maree / Type A3).